We begin with the raw amino-acid sequence, 160 residues long: Putative antiporter subunit mnhE2 (160 aa).

3 helical membrane passes run 23–43 (FKFT…YILH), 55–75 (IWVA…SSIS), and 100–120 (SNWA…STVI).

Belongs to the CPA3 antiporters (TC 2.A.63) subunit E family. In terms of assembly, may form a heterooligomeric complex that consists of seven subunits: mnhA2, mnhB2, mnhC2, mnhD2, mnhE2, mnhF2 and mnhG2.

Its subcellular location is the cell membrane. The polypeptide is Putative antiporter subunit mnhE2 (mnhE2) (Staphylococcus epidermidis (strain ATCC 35984 / DSM 28319 / BCRC 17069 / CCUG 31568 / BM 3577 / RP62A)).